The chain runs to 105 residues: Probable tetrachloroethene reductive dehalogenase membrane anchor protein (105 aa).

3 helical membrane-spanning segments follow: residues 3–23 (IYDV…QYGI), 35–55 (IPLQ…LAWG), and 66–86 (AIGM…IITY).

Belongs to the PceB family.

It is found in the cell membrane. May act as a membrane anchor for the tetrachloroethene reductive dehalogenase PceA. In Desulfitobacterium hafniense (Desulfitobacterium frappieri), this protein is Probable tetrachloroethene reductive dehalogenase membrane anchor protein.